Reading from the N-terminus, the 547-residue chain is GID complex substrate-recognition subunit 10 (547 aa).

2 stretches are compositionally biased toward polar residues: residues 1–11 and 28–41; these read MPRSLDNFQNE and GFPN…SNSQ. Disordered stretches follow at residues 1–42, 60–115, 169–217, and 285–313; these read MPRS…NSQR, EQDS…SNAT, RNSS…NPQS, and PAVL…QTPN. Residues 99 to 108 show a composition bias toward basic residues; that stretch reads SASRQRRRSG. A compositionally biased stretch (polar residues) spans 169–185; the sequence is RNSSTFGSNPNSVFSAQ. 3 stretches are compositionally biased toward low complexity: residues 186–199, 207–217, and 298–307; these read PTEP…SSFP, SRSISISNPQS, and SSSSASSYGS.

This sequence belongs to the GID4/VID24 family. Substrate-recognition component of the GID/CTLH complex. In the absence of stress, the complex exists as an inactive anticipatory complex (GID(Ant)), composed of Gid1, the E3 ubiquitin-ligase Gid2, Gid5, Gid8, and the RING-like subunit Gid9, awaiting a substrate receptor to form the active E3 ligase complex. When cells are shifted to glucose-containing medium, the substrate receptor Gid4 is induced and becomes part of the complex, named GID(SR4). Additionally, Gid7 transforms the GID(SR4) E3 ligase core into a higher-order supramolecular assembly (Chelator-GID(SR4)). Under osmotic or heat stress, the substrate receptor Gid10 is induced and becomes part of the complex, named GID(SR10). Interacts with proteins that have an N-terminal Pro/N-degron.

It localises to the nucleus. Functionally, substrate-recognition component of the GID E3 ligase complex recruiting N termini and catalyzing ubiquitination of proteins targeted for degradation. GID E3 is regulated through assembly with interchangeable N-degron-binding substrate receptors induced by distinct environmental perturbations. Required for the adaptation to osmotic or heat stress. Specific for substrates with an N-terminal Pro (Pro/N-degron). In Schizosaccharomyces pombe (strain 972 / ATCC 24843) (Fission yeast), this protein is GID complex substrate-recognition subunit 10 (gid10).